The following is a 238-amino-acid chain: Probable transcriptional regulatory protein YeeN (238 aa).

This sequence belongs to the TACO1 family. YeeN subfamily.

Its subcellular location is the cytoplasm. This is Probable transcriptional regulatory protein YeeN from Escherichia coli (strain UTI89 / UPEC).